Consider the following 367-residue polypeptide: Queuine tRNA-ribosyltransferase (367 aa).

The active-site Proton acceptor is D92. Residues 92-96 (DSGGF), D146, Q188, and G215 contribute to the substrate site. Residues 246 to 252 (GVGTPKD) are RNA binding. D265 functions as the Nucleophile in the catalytic mechanism. Zn(2+)-binding residues include C303, C305, C308, and H334.

It belongs to the queuine tRNA-ribosyltransferase family. As to quaternary structure, homodimer. Within each dimer, one monomer is responsible for RNA recognition and catalysis, while the other monomer binds to the replacement base PreQ1. Zn(2+) is required as a cofactor.

It catalyses the reaction 7-aminomethyl-7-carbaguanine + guanosine(34) in tRNA = 7-aminomethyl-7-carbaguanosine(34) in tRNA + guanine. It participates in tRNA modification; tRNA-queuosine biosynthesis. Functionally, catalyzes the base-exchange of a guanine (G) residue with the queuine precursor 7-aminomethyl-7-deazaguanine (PreQ1) at position 34 (anticodon wobble position) in tRNAs with GU(N) anticodons (tRNA-Asp, -Asn, -His and -Tyr). Catalysis occurs through a double-displacement mechanism. The nucleophile active site attacks the C1' of nucleotide 34 to detach the guanine base from the RNA, forming a covalent enzyme-RNA intermediate. The proton acceptor active site deprotonates the incoming PreQ1, allowing a nucleophilic attack on the C1' of the ribose to form the product. After dissociation, two additional enzymatic reactions on the tRNA convert PreQ1 to queuine (Q), resulting in the hypermodified nucleoside queuosine (7-(((4,5-cis-dihydroxy-2-cyclopenten-1-yl)amino)methyl)-7-deazaguanosine). The protein is Queuine tRNA-ribosyltransferase of Francisella tularensis subsp. holarctica (strain FTNF002-00 / FTA).